A 504-amino-acid chain; its full sequence is MTPVTTFPLVDAILAGRDRNLDGVILIAAQHLLQTTHAMLRSLFRVGLDPRNVAVIGKCYSTHPGVVDAMRADGIYVDDCSDAYAPHESFDTQYTRHVERFFAESWARLTAGRTARVVLLDDGGSLLAVAGAMLDASADVIGIEQTSAGYAKIVGCALGFPVINIARSSAKLLYESPIIAARVTQTAFERTAGIDSSAAILITGAGAIGTALADVLRPLHDRVDVYDTRSGCMTPIDLPNAIGGYDVIIGATGATSVPASMHELLRPGVLLMSASSSDREFDAVALRRRTTPNPDCHADLRVADGSVDATLLNSGFPVNFDGSPMCGDASMALTMALLAAAVLYASVAVADEMSSDHPHLGLIDQGDIVASFLNIDVPLQALSRLPLLSIDGYRRLQVRSGYTLFRQGERADHFFVIESGELEALVDGKVILRLGAGDHFGEACLLGGMRRIATVRACEPSVLWELDGKAFGDALHGDAAMREIAYGVARTRLMHAGASESLMV.

Helical transmembrane passes span 146–166 (TSAG…INIA), 196–216 (SSAA…ADVL), and 330–350 (SMAL…VAVA). Position 372 to 492 (372 to 492 (FLNIDVPLQA…EIAYGVARTR (121 aa))) interacts with a nucleoside 3',5'-cyclic phosphate.

It localises to the cell membrane. This is an uncharacterized protein from Mycobacterium tuberculosis (strain CDC 1551 / Oshkosh).